The following is a 456-amino-acid chain: MNYFILILPILPYLYGPAVCSEDETRLVKTLFTGYNKVVRPVSHFKDPVVVTVGLQLIQLISVDEVNQIVTSNVRLKQQWKDVHLQWNPDDYGGIRKIRIPSTDLWKPDLVLYNNADGDFAIVHETKVLLEHTGMITWTPPAIFKSYCEIVVLHFPFDLQNCSMKLGTWTYDGNLVIINPDSDRPDLSNFMESGEWVMKDYRSWKHWVYYACCPDTPYLDITYHFLLLRLPLYFIVNVIIPCMLFSFLTGLVFYLPTDSGEKMTLSISVLLSLTVFLLVIVELIPSTSSAVPLIGKYMLFTMIFVIASIIITVIVINTHHRSPSTHIMPAWVRKIFIDTIPNMMFFSTMKRPSQERQEKRLFPADFDISDISGKPMPASVTYHSPITKNPDVRSAIEGVKYIADTMKSDEESNNAAEEWKFVAMVLDHILLCVFMAVCIIGTLGVFAGRLIELSML.

Positions 1-20 are cleaved as a signal peptide; sequence MNYFILILPILPYLYGPAVC. Topologically, residues 21-230 are extracellular; it reads SEDETRLVKT…ITYHFLLLRL (210 aa). Disulfide bonds link cysteine 148-cysteine 162 and cysteine 212-cysteine 213. An N-linked (GlcNAc...) asparagine glycan is attached at asparagine 161. A run of 3 helical transmembrane segments spans residues 231-255, 263-281, and 297-316; these read PLYF…VFYL, MTLS…LVIV, and YMLF…VIVI. Residues 317–428 are Cytoplasmic-facing; it reads NTHHRSPSTH…WKFVAMVLDH (112 aa). Residues 429–447 traverse the membrane as a helical segment; it reads ILLCVFMAVCIIGTLGVFA.

The protein belongs to the ligand-gated ion channel (TC 1.A.9) family. Acetylcholine receptor (TC 1.A.9.1) subfamily. Alpha-1/CHRNA1 sub-subfamily. One of the alpha chains that assemble within the acetylcholine receptor, a pentamer of two alpha chains, a beta, a delta, and a gamma or epsilon chains.

Its subcellular location is the postsynaptic cell membrane. The protein resides in the cell membrane. The enzyme catalyses K(+)(in) = K(+)(out). It carries out the reaction Na(+)(in) = Na(+)(out). Functionally, upon acetylcholine binding, the AChR responds by an extensive change in conformation that affects all subunits and leads to opening of an ion-conducting channel across the plasma membrane. The sequence is that of Acetylcholine receptor subunit alpha (chrna1) from Danio rerio (Zebrafish).